A 188-amino-acid polypeptide reads, in one-letter code: F7-2 fimbrial protein (188 aa).

A signal peptide spans 1–21; it reads MIKSVIAGAVAMAVVSFGAYA. A disulfide bond links cysteine 43 and cysteine 82.

It belongs to the fimbrial protein family.

Its subcellular location is the fimbrium. Functionally, fimbriae (also called pili), polar filaments radiating from the surface of the bacterium to a length of 0.5-1.5 micrometers and numbering 100-300 per cell, enable bacteria to colonize the epithelium of specific host organs. The chain is F7-2 fimbrial protein (F7-2) from Escherichia coli O6:H1 (strain CFT073 / ATCC 700928 / UPEC).